The following is a 154-amino-acid chain: Superoxide dismutase [Cu-Zn] (154 aa).

Cu cation-binding residues include histidine 47, histidine 49, and histidine 64. Cysteine 58 and cysteine 147 are disulfide-bonded. Residues histidine 64, histidine 72, histidine 81, and aspartate 84 each coordinate Zn(2+). Cu cation is bound at residue histidine 121. A compositionally biased stretch (basic and acidic residues) spans 126-137; the sequence is DLGRGGNEESKK. The disordered stretch occupies residues 126 to 147; the sequence is DLGRGGNEESKKTGNAGPRPAC.

The protein belongs to the Cu-Zn superoxide dismutase family. In terms of assembly, homodimer. Cu cation serves as cofactor. The cofactor is Zn(2+).

It localises to the cytoplasm. The enzyme catalyses 2 superoxide + 2 H(+) = H2O2 + O2. Functionally, destroys radicals which are normally produced within the cells and which are toxic to biological systems. Plays an important role in the phase transition, and may be important in vivo, as it would facilitate the intracellular survival of the fungus by providing a non-toxic environment in the macrophage phagolysosomes. In Talaromyces marneffei (Penicillium marneffei), this protein is Superoxide dismutase [Cu-Zn].